The sequence spans 406 residues: Phosphopentomutase (406 aa).

6 residues coordinate Mn(2+): aspartate 10, aspartate 305, histidine 310, aspartate 346, histidine 347, and histidine 358.

This sequence belongs to the phosphopentomutase family. It depends on Mn(2+) as a cofactor.

The protein resides in the cytoplasm. The enzyme catalyses 2-deoxy-alpha-D-ribose 1-phosphate = 2-deoxy-D-ribose 5-phosphate. It catalyses the reaction alpha-D-ribose 1-phosphate = D-ribose 5-phosphate. The protein operates within carbohydrate degradation; 2-deoxy-D-ribose 1-phosphate degradation; D-glyceraldehyde 3-phosphate and acetaldehyde from 2-deoxy-alpha-D-ribose 1-phosphate: step 1/2. Its function is as follows. Isomerase that catalyzes the conversion of deoxy-ribose 1-phosphate (dRib-1-P) and ribose 1-phosphate (Rib-1-P) to deoxy-ribose 5-phosphate (dRib-5-P) and ribose 5-phosphate (Rib-5-P), respectively. The protein is Phosphopentomutase of Rhizobium johnstonii (strain DSM 114642 / LMG 32736 / 3841) (Rhizobium leguminosarum bv. viciae).